Consider the following 297-residue polypeptide: Protein AKTIP homolog (297 aa).

The interval 13–75 (FLSDLDEKSS…QRSPSGSSPE (63 aa)) is disordered. Over residues 17–42 (LDEKSSSSPHDEKKPGDGREVREEKS) the composition is skewed to basic and acidic residues. Positions 59 to 75 (MNLSIARQRSPSGSSPE) are enriched in polar residues. One can recognise a UBC core domain in the interval 84-232 (FLEYTLMAEY…VNECLRRCHN (149 aa)).

It belongs to the ubiquitin-conjugating enzyme family. FTS subfamily.

This is Protein AKTIP homolog from Nematostella vectensis (Starlet sea anemone).